Consider the following 573-residue polypeptide: Arylsulfatase I (573 aa).

Residues 1 to 23 (MHALTGLSLVSLLSFGYLSWDWA) form the signal peptide. Ca(2+) is bound by residues D56, D57, and C94. C94 (nucleophile) is an active-site residue. The residue at position 94 (C94) is a 3-oxoalanine (Cys). K148 lines the substrate pocket. Residue H150 is part of the active site. Residue H240 participates in substrate binding. 2 N-linked (GlcNAc...) asparagine glycosylation sites follow: N277 and N289. The Ca(2+) site is built by D298 and N299. Position 316 (K316) interacts with substrate. N467 and N497 each carry an N-linked (GlcNAc...) asparagine glycan. The tract at residues 516–550 (FNGGAWGPWASDEEEEEEEEEAGRARSFSRGRRKK) is disordered. Acidic residues predominate over residues 526–536 (SDEEEEEEEEE).

Belongs to the sulfatase family. Requires Ca(2+) as cofactor. Post-translationally, the oxidation of Cys-94 residue to 3-oxoalanine (also known as C(alpha)-formylglycine) by SUMF1/Sulfatase-modifying factor 1, seems critical for catalytic activity.

It is found in the secreted. Its subcellular location is the endoplasmic reticulum. In terms of biological role, displays arylsulfatase activity at neutral pH, when co-expressed with SUMF1; arylsulfatase activity is measured in the secretion medium of retinal cell line, but no activity is recorded when measured in cell extracts. The chain is Arylsulfatase I (ARSI) from Canis lupus familiaris (Dog).